Reading from the N-terminus, the 829-residue chain is Periplasmic nitrate reductase (829 aa).

A signal peptide (tat-type signal) is located at residues 1 to 31; it reads MKLSRRDFMKANAVAAAAAAAGLTIPTVARA. One can recognise a 4Fe-4S Mo/W bis-MGD-type domain in the interval 40–96; it reads ITWDKAPCRFCGTGCGVLVGTQNGRIVASQGDPDAPVNRGLNCIKGYFLPKIMYGKD. Residues Cys47, Cys50, Cys54, and Cys82 each coordinate [4Fe-4S] cluster. Residues Lys84, Gln151, Asn176, Cys180, 213–220, 263–265, Met373, Gln377, Asn483, 509–510, Lys532, Asp559, and 719–728 each bind Mo-bis(molybdopterin guanine dinucleotide); these read WGSNMAEM, QSD, SD, and TGRVLEHWHT. Phe795 lines the substrate pocket. 2 residues coordinate Mo-bis(molybdopterin guanine dinucleotide): Asn803 and Lys820.

Belongs to the prokaryotic molybdopterin-containing oxidoreductase family. NasA/NapA/NarB subfamily. In terms of assembly, component of the periplasmic nitrate reductase NapAB complex composed of NapA and NapB. [4Fe-4S] cluster is required as a cofactor. The cofactor is Mo-bis(molybdopterin guanine dinucleotide). Predicted to be exported by the Tat system. The position of the signal peptide cleavage has not been experimentally proven.

It is found in the periplasm. It catalyses the reaction 2 Fe(II)-[cytochrome] + nitrate + 2 H(+) = 2 Fe(III)-[cytochrome] + nitrite + H2O. In terms of biological role, catalytic subunit of the periplasmic nitrate reductase complex NapAB. Receives electrons from NapB and catalyzes the reduction of nitrate to nitrite. This chain is Periplasmic nitrate reductase, found in Edwardsiella ictaluri (strain 93-146).